The sequence spans 321 residues: Corticotropin-releasing factor-binding protein (321 aa).

Residues 1–21 form the signal peptide; the sequence is MTPASRPDWCLILLFLAVLRG. Disulfide bonds link Cys-59-Cys-80, Cys-103-Cys-140, Cys-182-Cys-204, Cys-237-Cys-264, and Cys-277-Cys-317. Residue Asn-203 is glycosylated (N-linked (GlcNAc...) asparagine).

Belongs to the CRF-binding protein family.

The protein localises to the secreted. Its function is as follows. Binds CRF and inactivates it. May prevent inappropriate pituitary-adrenal stimulation in pregnancy. This is Corticotropin-releasing factor-binding protein (crhbp) from Xenopus laevis (African clawed frog).